The sequence spans 267 residues: MEMO1 family protein aq_890 (267 aa).

This sequence belongs to the MEMO1 family.

The sequence is that of MEMO1 family protein aq_890 from Aquifex aeolicus (strain VF5).